Here is a 438-residue protein sequence, read N- to C-terminus: Minor capsid protein p49 (438 aa).

Positions 134-167 are disordered; sequence PQVSGLKDTQKNCLTQPSSLPSLKNPKNSSVPST. A compositionally biased stretch (polar residues) spans 144–167; that stretch reads KNCLTQPSSLPSLKNPKNSSVPST.

Belongs to the asfivirus p49 structural protein family.

The protein localises to the virion. Together with the penton and the other minor capsid proteins (M1249L, p17), forms a complicated network immediately below the outer capsid shell, stabilizing the whole capsid. Plays an essential role in the formation of infectious virus particles. Especially required for the formation of the capsid vertices. During virion assembly, associates with the membrane and probably mediates the docking of the penton complex to the inner membrane, where it recruits the capsomers to form the penton core. The chain is Minor capsid protein p49 from Ornithodoros (relapsing fever ticks).